The sequence spans 201 residues: Large ribosomal subunit protein uL4 (201 aa).

A disordered region spans residues 39-72 (RRGTASTKTRAQVSKSGKKMYSQKGTGNARHGDR). Positions 42–53 (TASTKTRAQVSK) are enriched in polar residues.

This sequence belongs to the universal ribosomal protein uL4 family. Part of the 50S ribosomal subunit.

Functionally, one of the primary rRNA binding proteins, this protein initially binds near the 5'-end of the 23S rRNA. It is important during the early stages of 50S assembly. It makes multiple contacts with different domains of the 23S rRNA in the assembled 50S subunit and ribosome. Its function is as follows. Forms part of the polypeptide exit tunnel. This is Large ribosomal subunit protein uL4 from Deinococcus deserti (strain DSM 17065 / CIP 109153 / LMG 22923 / VCD115).